Here is a 1470-residue protein sequence, read N- to C-terminus: Calmodulin-regulated spectrin-associated protein 2 (1470 aa).

Residues 222 to 335 (WKLVPARYRK…FMAELFWWFE (114 aa)) enclose the Calponin-homology (CH) domain. A disordered region spans residues 374–397 (SSSSSDFTSRYTRPQTHSSVSGGI). Over residues 380 to 390 (FTSRYTRPQTH) the composition is skewed to polar residues. A phosphoserine mark is found at Ser-402 and Ser-404. Thr-412 carries the post-translational modification Phosphothreonine. Phosphoserine occurs at positions 450, 581, 582, 594, and 656. Disordered stretches follow at residues 580–622 (QSSP…EDSS) and 648–712 (ASNP…EGSE). Position 661 is a phosphothreonine (Thr-661). At Ser-663 the chain carries Phosphoserine. The segment covering 663–682 (STKSQPGSSASSSSGVKMTS) has biased composition (low complexity). The span at 686–696 (QKFRKLNHTDG) shows a compositional bias: basic and acidic residues. Residues 739–776 (LLASEMVHLRMRLEEKRRAIEAQKKKMEAAFTKQRQKM) are a coiled coil. Residues 796 to 835 (REEAAGAEDEKVYTDRAKEKESQKMDGQRSKSLADIKESM) show a composition bias toward basic and acidic residues. Positions 796–864 (REEAAGAEDE…QWNLTSPSEE (69 aa)) are disordered. At Ser-845 the chain carries Phosphoserine. The stretch at 870 to 909 (ELLEYTKSIEKLNSSLHFLQQEMQRLSLQQEMLMQMREQQ) forms a coiled coil. The interval 905-1016 (MREQQSWVIS…IQTRSFVCFG (112 aa)) is MBD region. Phosphoserine occurs at positions 914 and 919. 2 disordered regions span residues 930-1059 (RQAG…PLES) and 1078-1099 (NEDQ…PTAP). The segment covering 935-946 (SSAAAPFSADSP) has biased composition (low complexity). Residues 952–971 (SPQSSTRKSASFSVKNQRTP) show a composition bias toward polar residues. 3 positions are modified to phosphothreonine: Thr-979, Thr-984, and Thr-986. 2 positions are modified to phosphoserine: Ser-990 and Ser-1001. Residues 1001–1011 (SPSQVPIQTRS) are compositionally biased toward polar residues. Composition is skewed to basic and acidic residues over residues 1020 to 1037 (EPQK…EPSE) and 1044 to 1056 (SCDH…EVKP). Residues 1086–1098 (TDPPPKPVFPPTA) show a composition bias toward pro residues. Ser-1129 carries the phosphoserine modification. Residues 1147-1219 (KDDQKAENDM…REFIRQEYMR (73 aa)) adopt a coiled-coil conformation. The span at 1167–1233 (RLRREKETQL…KLMEDMDTVI (67 aa)) shows a compositional bias: basic and acidic residues. Residues 1167 to 1327 (RLRREKETQL…TTSSVASGTE (161 aa)) form a disordered region. Over residues 1268-1280 (SSLSLASLNTGDT) the composition is skewed to polar residues. Phosphoserine is present on residues Ser-1294, Ser-1300, and Ser-1302. The span at 1315–1327 (NASTTSSVASGTE) shows a compositional bias: polar residues. Residues 1330-1464 (GPKLYKEPSA…QTKRPVTPKK (135 aa)) enclose the CKK domain.

The protein belongs to the CAMSAP1 family. In terms of assembly, interacts with CAMSAP3. Interacts with KATNA1 and KATNB1; leading to regulate the length of CAMSAP2-decorated microtubule stretches. Interacts with a complex formed by AKAP9 and PDE4DIP; this interaction, which is PDE4DIP isoform-specific, recruits CAMSAP2 to the Golgi. Interacts with MAPRE1/EB1. As to expression, present in the soma, axon, and dendritic shaft of hippocampal neurons (at protein level).

It localises to the cytoplasm. It is found in the cytoskeleton. The protein localises to the golgi apparatus. The protein resides in the cilium basal body. In terms of biological role, key microtubule-organizing protein that specifically binds the minus-end of non-centrosomal microtubules and regulates their dynamics and organization. Specifically recognizes growing microtubule minus-ends and autonomously decorates and stabilizes microtubule lattice formed by microtubule minus-end polymerization. Acts on free microtubule minus-ends that are not capped by microtubule-nucleating proteins or other factors and protects microtubule minus-ends from depolymerization. In addition, it also reduces the velocity of microtubule polymerization. Through the microtubule cytoskeleton, also regulates the organization of cellular organelles including the Golgi and the early endosomes. Essential for the tethering, but not for nucleation of non-centrosomal microtubules at the Golgi: together with Golgi-associated proteins AKAP9 and PDE4DIP, required to tether non-centrosomal minus-end microtubules to the Golgi, an important step for polarized cell movement. Also acts as a regulator of neuronal polarity and development: localizes to non-centrosomal microtubule minus-ends in neurons and stabilizes non-centrosomal microtubules, which is required for neuronal polarity, axon specification and dendritic branch formation. Through the microtubule cytoskeleton, regulates the autophagosome transport. The sequence is that of Calmodulin-regulated spectrin-associated protein 2 from Rattus norvegicus (Rat).